A 558-amino-acid chain; its full sequence is MDFFKKEILDWSIYLSLHYIAHACSNSSTSHIIQEYNLIRTYKKVDKTIVDFLSRWPNLFHILEYGENILHIYSMDDANTNIIIFFLDNVLNINKNGSFIHNLGLSSSINIKEYVYQLVNNDHLDNGIRLMLENGRRTRHFLSYILDTVNIYICILINHGFYIDAVDSYGCTLLHRCIYHYKKSESESYNELIKILLNNGSDVDKKDTHGNTPFILLCKHDIDNVELFEICLENANIDSVDFNGYTPLHYVSCRNKYDFVKSLISKGANVNTRNRFGTTPFYCGIIHGISLIKLYLESDTELEIDNEHIVRHLIIFDAVESLDYLLFRGVIDINYRTIYNETSIYDAVSYNAYNMLVYLLNRNGDFETITTSGCTCISKAVANNNKIIMEVLLSKQPSLKIMILSIIAITKHKQHNTNLLKMCIKYTACMTDYDTLIDVQSLQQYKWYILKCFDEIDIMKRCYIKNKTVFQLVFCTKDINTLMRYGRHPSFVKYTSLDVYGSRVRNIIASIRYRQRLISLLSKKLDVGDKWACFPNEIKYKILENFNDNELSTYLKIL.

ANK repeat units lie at residues 65 to 95 (YGEN…NINK), 169 to 205 (YGCT…DVDK), 209 to 239 (HGNT…NIDS), 243 to 272 (NGYT…NVNT), 276 to 304 (FGTT…ELEI), 339 to 368 (YNET…DFET), and 372 to 401 (SGCT…SLKI).

The protein belongs to the orthopoxvirus OPG189 protein family.

Functionally, contributes to viral release without involving rearrangement of host actin. This chain is Ankyrin repeat protein OPG189 (OPG189), found in Homo sapiens (Human).